A 168-amino-acid polypeptide reads, in one-letter code: Microtubule-associated protein Jupiter (168 aa).

Polar residues predominate over residues 1 to 14 (MISNFDCTDNQASS). The segment at 1 to 33 (MISNFDCTDNQASSKVLRPPGGGSSDIFGSEMP) is disordered. The residue at position 24 (serine 24) is a Phosphoserine. Threonine 35 is subject to Phosphothreonine. Residues 76–87 (RGQKTVDSHSRL) show a composition bias toward basic and acidic residues. Disordered stretches follow at residues 76 to 106 (RGQK…KSSI) and 124 to 168 (NGHY…GAGK). Phosphothreonine occurs at positions 92 and 96. A phosphoserine mark is found at serine 105, serine 133, and serine 144. Over residues 131–144 (SGSVSSASSSVSSS) the composition is skewed to low complexity. Residues 145–155 (TENLKMNSGSR) show a composition bias toward polar residues.

Belongs to the MAP Jupiter family.

The protein localises to the nucleus. The protein resides in the cytoplasm. Its subcellular location is the cytoskeleton. It localises to the spindle. Binds to all microtubule populations. In Drosophila simulans (Fruit fly), this protein is Microtubule-associated protein Jupiter.